A 59-amino-acid polypeptide reads, in one-letter code: Large ribosomal subunit protein bL32 (59 aa).

Residues 1 to 20 (MAVPKKKTSKGKRNQRHATW) show a composition bias toward basic residues. The segment at 1–22 (MAVPKKKTSKGKRNQRHATWKG) is disordered.

This sequence belongs to the bacterial ribosomal protein bL32 family.

The sequence is that of Large ribosomal subunit protein bL32 from Prochlorococcus marinus (strain NATL1A).